The following is a 524-amino-acid chain: uncharacterized protein (524 aa).

The signal sequence occupies residues 1–21; sequence MLLRSVWYKLGSLLIILPLTG. Cys-22 carries N-palmitoyl cysteine lipidation. A lipid anchor (S-diacylglycerol cysteine) is attached at Cys-22.

The protein belongs to the MG067/MG068/MG395 family.

Its subcellular location is the cell membrane. This is an uncharacterized protein from Mycoplasma pneumoniae (strain ATCC 29342 / M129 / Subtype 1) (Mycoplasmoides pneumoniae).